The primary structure comprises 1293 residues: Period circadian protein homolog 1 (1293 aa).

The disordered stretch occupies residues 1 to 134 (MSGPLEGADG…SSEQSARART (134 aa)). Residues 1 to 151 (MSGPLEGADG…LRELKLRLPP (151 aa)) form an interaction with BTRC region. 2 stretches are compositionally biased toward low complexity: residues 48–57 (NSNGSSGNES) and 64–115 (GASQ…ASSE). Over residues 116 to 132 (QDNPSTSGCSSEQSARA) the composition is skewed to polar residues. A Phosphothreonine; by CSNK1E modification is found at Thr121. Phosphoserine; by CSNK1E occurs at positions 122 and 126. A Nuclear export signal 1 motif is present at residues 138–147 (LMTALRELKL). 2 consecutive PAS domains span residues 208–275 (ITSE…PSRL) and 348–414 (YEAP…KILQ). In terms of domain architecture, PAC spans 422-465 (HSPIRFCARNGEYVTMDTSWAGFVHPWSRKVAFVLGRHKVRTAP). The short motif at 489 to 498 (LSEQIHRLLL) is the Nuclear export signal 2 element. 2 disordered regions span residues 509–544 (LCGV…PAPV) and 647–697 (TKRK…KEPV). Low complexity-rich tracts occupy residues 513 to 533 (GPLM…SNGG) and 652 to 661 (ASSSCTASSA). Residues 596-814 (ELEVAPAPDQ…GLDTSSVAPS (219 aa)) are required for phosphorylation by CSNK1E. A phosphoserine mark is found at Ser660, Ser662, and Ser703. Disordered stretches follow at residues 748 to 771 (GLAP…APDA), 808 to 870 (TSSV…PPAT), 935 to 1094 (SQAP…SKYF), and 1204 to 1293 (SVQD…NGTS). The span at 750 to 768 (APGPAPSPAPSPTVAPDPA) shows a compositional bias: pro residues. The residue at position 814 (Ser814) is a Phosphoserine. A Nuclear localization signal motif is present at residues 823 to 839 (IPSGRRHHCRSKAKRSR). Over residues 826-843 (GRRHHCRSKAKRSRHHQT) the composition is skewed to basic residues. 2 stretches are compositionally biased toward pro residues: residues 856–870 (SPVP…PPAT) and 952–962 (PSLPPPPPSPP). Residues 969-982 (LFNSRCSSPLQLNL) are compositionally biased toward polar residues. A phosphoserine mark is found at Ser975 and Ser976. Residues 978-985 (LQLNLLQL) carry the Nuclear export signal 3 motif. Residues 1032 to 1058 (LSGSSDLLELLLQEDSRSGTGSAASGS) show a composition bias toward low complexity. An LXXLL motif is present at residues 1039 to 1043 (LELLL). Residues 1059–1073 (LGSGLGSGSGSGSHE) show a composition bias toward gly residues. Positions 1074–1091 (GGSTSASITRSSQSSHTS) are enriched in low complexity. Residues 1145-1293 (SRDAASVLKQ…ALPAEENGTS (149 aa)) are CRY binding domain. Positions 1232–1250 (GEGGGVGGGGGGVGGGGGD) are enriched in gly residues. Residues 1255–1269 (AQTQIGTKGSSSQDS) are compositionally biased toward polar residues.

In terms of assembly, homodimer. Component of the circadian core oscillator, which includes the CRY proteins, CLOCK or NPAS2, BMAL1 or BMAL2, CSNK1D and/or CSNK1E, TIMELESS, and the PER proteins. Interacts directly with TIMELESS, PER2, PER3, CRY1 and CRY2. Interacts with BMAL1 and CLOCK. Interacts with GPRASP1. Interacts (phosphorylated) with BTRC and FBXW11; the interactions trigger proteasomal degradation. Interacts with NONO and WDR5. Interacts with SFPQ. Interacts with USP2. Interacts with HNF4A. Phosphorylated on serine residues by CSNK1D, CSNK1E and probably also by CSNK1G2. Phosphorylation by CSNK1D or CSNK1E promotes nuclear location of PER proteins as well as ubiquitination and subsequent degradation. May be dephosphorylated by PP1. In terms of processing, ubiquitinated; requires phosphorylation by CSNK1E and interaction with BTRC and FBXW11. Deubiquitinated by USP2. In terms of tissue distribution, expressed in pancreas. In the CNS, highly expressed in the SCN, internal granular layer of granular cells of the olfactory bulb, tuberculum olfactorium, piriform cortex, gyrus dentatus of the hippocampus, cerebellum, pars tuberalis/median eminence, and pituitary, and moderately in the tenia tecta, caudate putamen, accumbens nucleus, spinal cord, superior and inferior colliculus and pineal gland.

It is found in the nucleus. Its subcellular location is the cytoplasm. Its function is as follows. Transcriptional repressor which forms a core component of the circadian clock. The circadian clock, an internal time-keeping system, regulates various physiological processes through the generation of approximately 24 hour circadian rhythms in gene expression, which are translated into rhythms in metabolism and behavior. It is derived from the Latin roots 'circa' (about) and 'diem' (day) and acts as an important regulator of a wide array of physiological functions including metabolism, sleep, body temperature, blood pressure, endocrine, immune, cardiovascular, and renal function. Consists of two major components: the central clock, residing in the suprachiasmatic nucleus (SCN) of the brain, and the peripheral clocks that are present in nearly every tissue and organ system. Both the central and peripheral clocks can be reset by environmental cues, also known as Zeitgebers (German for 'timegivers'). The predominant Zeitgeber for the central clock is light, which is sensed by retina and signals directly to the SCN. The central clock entrains the peripheral clocks through neuronal and hormonal signals, body temperature and feeding-related cues, aligning all clocks with the external light/dark cycle. Circadian rhythms allow an organism to achieve temporal homeostasis with its environment at the molecular level by regulating gene expression to create a peak of protein expression once every 24 hours to control when a particular physiological process is most active with respect to the solar day. Transcription and translation of core clock components (CLOCK, NPAS2, BMAL1, BMAL2, PER1, PER2, PER3, CRY1 and CRY2) plays a critical role in rhythm generation, whereas delays imposed by post-translational modifications (PTMs) are important for determining the period (tau) of the rhythms (tau refers to the period of a rhythm and is the length, in time, of one complete cycle). A diurnal rhythm is synchronized with the day/night cycle, while the ultradian and infradian rhythms have a period shorter and longer than 24 hours, respectively. Disruptions in the circadian rhythms contribute to the pathology of cardiovascular diseases, cancer, metabolic syndromes and aging. A transcription/translation feedback loop (TTFL) forms the core of the molecular circadian clock mechanism. Transcription factors, CLOCK or NPAS2 and BMAL1 or BMAL2, form the positive limb of the feedback loop, act in the form of a heterodimer and activate the transcription of core clock genes and clock-controlled genes (involved in key metabolic processes), harboring E-box elements (5'-CACGTG-3') within their promoters. The core clock genes: PER1/2/3 and CRY1/2 which are transcriptional repressors form the negative limb of the feedback loop and interact with the CLOCK|NPAS2-BMAL1|BMAL2 heterodimer inhibiting its activity and thereby negatively regulating their own expression. This heterodimer also activates nuclear receptors NR1D1/2 and RORA/B/G, which form a second feedback loop and which activate and repress BMAL1 transcription, respectively. Regulates circadian target genes expression at post-transcriptional levels, but may not be required for the repression at transcriptional level. Controls PER2 protein decay. Represses CRY2 preventing its repression on CLOCK/BMAL1 target genes such as FXYD5 and SCNN1A in kidney and PPARA in liver. Besides its involvement in the maintenance of the circadian clock, has an important function in the regulation of several processes. Participates in the repression of glucocorticoid receptor NR3C1/GR-induced transcriptional activity by reducing the association of NR3C1/GR to glucocorticoid response elements (GREs) by BMAL1:CLOCK. Plays a role in the modulation of the neuroinflammatory state via the regulation of inflammatory mediators release, such as CCL2 and IL6. In spinal astrocytes, negatively regulates the MAPK14/p38 and MAPK8/JNK MAPK cascades as well as the subsequent activation of NFkappaB. Coordinately regulates the expression of multiple genes that are involved in the regulation of renal sodium reabsorption. Can act as gene expression activator in a gene and tissue specific manner, in kidney enhances WNK1 and SLC12A3 expression in collaboration with CLOCK. Modulates hair follicle cycling. Represses the CLOCK-BMAL1 induced transcription of BHLHE40/DEC1. The polypeptide is Period circadian protein homolog 1 (Rattus norvegicus (Rat)).